Consider the following 1011-residue polypeptide: Ankyrin repeat domain-containing protein 18B (1011 aa).

ANK repeat units follow at residues Lys-67 to Ile-96, Leu-100 to Ile-129, Tyr-133 to Ala-162, Glu-166 to Ala-195, and Phe-199 to Ser-228. Disordered stretches follow at residues Leu-264–Lys-330 and Met-533–Arg-554. Coiled coils occupy residues Glu-277–Gln-319, Asn-385–Asp-639, Ile-692–Met-722, and Phe-752–Ala-908. The segment covering Lys-280–Glu-293 has biased composition (basic residues). Positions Gly-294–Gln-319 are enriched in basic and acidic residues.

The protein is Ankyrin repeat domain-containing protein 18B (ANKRD18B) of Homo sapiens (Human).